The primary structure comprises 154 residues: Ribosome maturation factor RimP (154 aa).

This sequence belongs to the RimP family.

The protein localises to the cytoplasm. Its function is as follows. Required for maturation of 30S ribosomal subunits. The chain is Ribosome maturation factor RimP from Finegoldia magna (strain ATCC 29328 / DSM 20472 / WAL 2508) (Peptostreptococcus magnus).